A 408-amino-acid polypeptide reads, in one-letter code: Succinylornithine transaminase (408 aa).

Position 252 is an N6-(pyridoxal phosphate)lysine (Lys-252).

It belongs to the class-III pyridoxal-phosphate-dependent aminotransferase family. AstC subfamily. Pyridoxal 5'-phosphate is required as a cofactor.

It catalyses the reaction N(2)-succinyl-L-ornithine + 2-oxoglutarate = N-succinyl-L-glutamate 5-semialdehyde + L-glutamate. It participates in amino-acid degradation; L-arginine degradation via AST pathway; L-glutamate and succinate from L-arginine: step 3/5. Functionally, catalyzes the transamination of N(2)-succinylornithine and alpha-ketoglutarate into N(2)-succinylglutamate semialdehyde and glutamate. Can also act as an acetylornithine aminotransferase. In Salmonella paratyphi A (strain ATCC 9150 / SARB42), this protein is Succinylornithine transaminase.